The following is a 132-amino-acid chain: MTMPTKSFHRTDRVSAQVRRDLGTIVHAAVRDHGLPSVSVSDVEISRDLAHAKVFVTALQQERSAEAVKGLKEIAGQLRTQLARAMKLRHVPELHFHYDDSVDRGERIDNLLRDLDDIGPEAAPDAQDAEPR.

It belongs to the RbfA family. In terms of assembly, monomer. Binds 30S ribosomal subunits, but not 50S ribosomal subunits or 70S ribosomes.

It is found in the cytoplasm. One of several proteins that assist in the late maturation steps of the functional core of the 30S ribosomal subunit. Associates with free 30S ribosomal subunits (but not with 30S subunits that are part of 70S ribosomes or polysomes). Required for efficient processing of 16S rRNA. May interact with the 5'-terminal helix region of 16S rRNA. The protein is Ribosome-binding factor A of Xanthomonas campestris pv. campestris (strain 8004).